The chain runs to 404 residues: Cysteine desulfurase IscS (404 aa).

Pyridoxal 5'-phosphate is bound by residues A75–T76, N155, Q183, and S203–H205. An N6-(pyridoxal phosphate)lysine modification is found at K206. T243 is a pyridoxal 5'-phosphate binding site. C328 serves as the catalytic Cysteine persulfide intermediate. C328 is a [2Fe-2S] cluster binding site.

Belongs to the class-V pyridoxal-phosphate-dependent aminotransferase family. NifS/IscS subfamily. In terms of assembly, homodimer. Forms a heterotetramer with IscU, interacts with other sulfur acceptors. Requires pyridoxal 5'-phosphate as cofactor.

It localises to the cytoplasm. The enzyme catalyses (sulfur carrier)-H + L-cysteine = (sulfur carrier)-SH + L-alanine. The protein operates within cofactor biosynthesis; iron-sulfur cluster biosynthesis. Master enzyme that delivers sulfur to a number of partners involved in Fe-S cluster assembly, tRNA modification or cofactor biosynthesis. Catalyzes the removal of elemental sulfur atoms from cysteine to produce alanine. Functions as a sulfur delivery protein for Fe-S cluster synthesis onto IscU, an Fe-S scaffold assembly protein, as well as other S acceptor proteins. This chain is Cysteine desulfurase IscS, found in Histophilus somni (strain 2336) (Haemophilus somnus).